Consider the following 396-residue polypeptide: S-adenosylmethionine synthase 4 (396 aa).

A Mg(2+)-binding site is contributed by E13. H19 lines the ATP pocket. K(+) is bound at residue E47. Residues E60 and Q103 each coordinate L-methionine. Residues 171 to 173 (DGK), 239 to 242 (SGRF), D250, 256 to 257 (RK), A273, K277, and K281 contribute to the ATP site. An L-methionine-binding site is contributed by D250. K281 is an L-methionine binding site.

The protein belongs to the AdoMet synthase family. Homotetramer. It depends on Mn(2+) as a cofactor. Requires Mg(2+) as cofactor. Co(2+) is required as a cofactor. K(+) serves as cofactor. Expressed in roots, stems and leaves (at protein level).

Its subcellular location is the cytoplasm. It catalyses the reaction L-methionine + ATP + H2O = S-adenosyl-L-methionine + phosphate + diphosphate. It functions in the pathway amino-acid biosynthesis; S-adenosyl-L-methionine biosynthesis; S-adenosyl-L-methionine from L-methionine: step 1/1. Functionally, catalyzes the formation of S-adenosylmethionine from methionine and ATP. The reaction comprises two steps that are both catalyzed by the same enzyme: formation of S-adenosylmethionine (AdoMet) and triphosphate, and subsequent hydrolysis of the triphosphate. May be involved in the synthesis of betain in response to abiotic stress such as high salinity. In Atriplex nummularia (Old man saltbush), this protein is S-adenosylmethionine synthase 4 (SAMS4).